A 175-amino-acid polypeptide reads, in one-letter code: ATP synthase subunit b (175 aa).

The chain crosses the membrane as a helical span at residues 13–33 (LLSPNPGLIFWTAVTFLLLLL).

Belongs to the ATPase B chain family. As to quaternary structure, F-type ATPases have 2 components, F(1) - the catalytic core - and F(0) - the membrane proton channel. F(1) has five subunits: alpha(3), beta(3), gamma(1), delta(1), epsilon(1). F(0) has four main subunits: a(1), b(2) and c(10-14). The alpha and beta chains form an alternating ring which encloses part of the gamma chain. F(1) is attached to F(0) by a central stalk formed by the gamma and epsilon chains, while a peripheral stalk is formed by the delta and b chains.

It is found in the cell inner membrane. F(1)F(0) ATP synthase produces ATP from ADP in the presence of a proton or sodium gradient. F-type ATPases consist of two structural domains, F(1) containing the extramembraneous catalytic core and F(0) containing the membrane proton channel, linked together by a central stalk and a peripheral stalk. During catalysis, ATP synthesis in the catalytic domain of F(1) is coupled via a rotary mechanism of the central stalk subunits to proton translocation. Functionally, component of the F(0) channel, it forms part of the peripheral stalk, linking F(1) to F(0). In Chloroherpeton thalassium (strain ATCC 35110 / GB-78), this protein is ATP synthase subunit b.